The sequence spans 1317 residues: Nucleoporin NUP145 (1317 aa).

Residues 1 to 16 (MFNKSVNSGFTFGNQN) are compositionally biased toward polar residues. A disordered region spans residues 1 to 36 (MFNKSVNSGFTFGNQNTSTPTSTPAQPSSSLQFPQK). The FG 1 repeat unit spans residues 12-13 (FG). Residues 17–30 (TSTPTSTPAQPSSS) are compositionally biased toward low complexity. The GLFG 1 repeat unit spans residues 39 to 42 (GLFG). An FG 2 repeat occupies 79–80 (FG). The GLFG 2 repeat unit spans residues 89–92 (GLFG). The stretch at 106 to 107 (FG) is one FG 3 repeat. A disordered region spans residues 133–165 (QNGGLFGNSNNNNITSTTQNGGLFGKPTTTPAG). 4 GLFG repeats span residues 136 to 139 (GLFG), 154 to 157 (GLFG), 168 to 171 (GLFG), and 181 to 184 (GLFG). The span at 139-164 (GNSNNNNITSTTQNGGLFGKPTTTPA) shows a compositional bias: low complexity. The stretch at 193–196 (GIFG) is one GLFG 7; approximate repeat. The GLFG 8 repeat unit spans residues 206 to 209 (GLFG). The disordered stretch occupies residues 249–278 (TSSLSDVNGKSDAEPKPIENRRTYSFSSSV). The span at 257–270 (GKSDAEPKPIENRR) shows a compositional bias: basic and acidic residues. S273 carries the post-translational modification Phosphoserine. Residues 369 to 385 (RKLKIDSNRSAAKKLKL) carry the Bipartite nuclear localization signal motif. Residues 390–450 (PAITKKHMQD…NLNKQDGENT (61 aa)) are disordered. The tract at residues 398 to 523 (QDEQDSSENE…FGKIVIFRSS (126 aa)) is required for autocatalytic cleavage. Residues S403, S404, and S414 each carry the phosphoserine modification. Positions 418–427 (IDRKENRDNN) are enriched in basic and acidic residues. Positions 428–444 (LDNTYLNGKEQSNNLNK) are enriched in polar residues. A Peptidase S59 domain is found at 458 to 605 (SFGYWCSPSP…GTWTFKVNHF (148 aa)). The tract at residues 460-604 (GYWCSPSPEQ…GGTWTFKVNH (145 aa)) is nucleoporin RNA-binding motif (NRM). Phosphoserine occurs at positions 667, 679, and 689. Position 751 is a phosphothreonine (T751).

The protein belongs to the nucleoporin GLFG family. Component of the nuclear pore complex (NPC). NPC constitutes the exclusive means of nucleocytoplasmic transport. NPCs allow the passive diffusion of ions and small molecules and the active, nuclear transport receptor-mediated bidirectional transport of macromolecules such as proteins, RNAs, ribonucleoparticles (RNPs), and ribosomal subunits across the nuclear envelope. Due to its 8-fold rotational symmetry, all subunits are present with 8 copies or multiples thereof. NUP145C is part of the heptameric 0.5 MDa autoassembling NUP84 NPC subcomplex (NUP84, NUP85, NUP120, NUP133, NUP145C, SEC13 and SEH1). NUP145N may bind homomeric RNA and interacts through its FG repeats with karyopherins. Interacts with MLP1 and MLP2. Post-translationally, NUP145 is autocatalytically cleaved in NUP145N and NUP145C.

It localises to the nucleus. It is found in the nuclear pore complex. Its subcellular location is the nucleus membrane. In terms of biological role, functions as a component of the nuclear pore complex (NPC). NPC components, collectively referred to as nucleoporins (NUPs), can play the role of both NPC structural components and of docking or interaction partners for transiently associated nuclear transport factors. Active directional transport is assured by both, a Phe-Gly (FG) repeat affinity gradient for these transport factors across the NPC and a transport cofactor concentration gradient across the nuclear envelope (GSP1 and GSP2 GTPases associated predominantly with GTP in the nucleus, with GDP in the cytoplasm). NUP145 is autocatalytically cleaved in vivo in 2 polypeptides which assume different functions in the NPC. NUP145N as one of the FG repeat nucleoporins participates in karyopherin interactions and contains part of the autocatalytic cleavage activity. NUP145C as part of the NUP84 complex is involved in nuclear poly(A)+ RNA and tRNA export. It is also required for normal NPC distribution (probably through interactions with MLP1 and MLP2) and NPC assembly, as well as for normal nuclear envelope organization. The protein is Nucleoporin NUP145 (NUP145) of Saccharomyces cerevisiae (strain ATCC 204508 / S288c) (Baker's yeast).